We begin with the raw amino-acid sequence, 127 residues long: Ribonuclease VapC6 (127 aa).

The region spanning 26–120 (EPQRAEFCRS…ERHLPDIRVR (95 aa)) is the PINc domain. A Mg(2+)-binding site is contributed by Asp86.

Belongs to the PINc/VapC protein family. Mg(2+) serves as cofactor.

Toxic component of a type II toxin-antitoxin (TA) system. An RNase. The cognate antitoxin is VapB6. The chain is Ribonuclease VapC6 from Mycobacterium tuberculosis (strain CDC 1551 / Oshkosh).